Consider the following 478-residue polypeptide: MSIALGNLFDLESQESGGSPLFMSPAPSTDPQPISGEKNGGDGGRIPVEEWLPITESRKGNVYTATFHLLCSGIGLQVILLPAAFAALGWVWGTIILTVGFVWKLYTTWLLVQLHEAVPGIRISRYVRLAIASFGVKLGKLLGIFPVMYLSGGACTILVITGGKSIQQLLQIMSDDNTAPLTSVQCFLVFSCIAMIMSQFPNLNSLFGVSLIGAFMGIAYCTVIWILPVASDSQRTQVSVSYATMDKSFVHIFNAIGLIALVYRGNNLVLEIQGTLPSDSKNPSCKTMWRAVMISHALVAICMFPLTFAVYWAYGDKIPATGGPVGNYLKLYTQEHSKRAACFIHLTFIFSCLCSYPINLMPACDNIEMVYITKKKKPASIIVRMMLRVFLSLVCFTIAVGFPFLPYLAVLIGAIALLVTFTYPCFMWISIKKPQRKSPMWLFNVLVGCLGASLSVLLLVASAMRLAQKGLHANFFRP.

Over 1–63 the chain is Cytoplasmic; that stretch reads MSIALGNLFD…ITESRKGNVY (63 aa). A disordered region spans residues 15 to 45; it reads ESGGSPLFMSPAPSTDPQPISGEKNGGDGGR. The helical transmembrane segment at 64–86 threads the bilayer; the sequence is TATFHLLCSGIGLQVILLPAAFA. The Extracellular segment spans residues 87 to 89; it reads ALG. A helical transmembrane segment spans residues 90–112; it reads WVWGTIILTVGFVWKLYTTWLLV. Residues 113–140 lie on the Cytoplasmic side of the membrane; the sequence is QLHEAVPGIRISRYVRLAIASFGVKLGK. Residues 141–161 traverse the membrane as a helical segment; sequence LLGIFPVMYLSGGACTILVIT. At 162-177 the chain is on the extracellular side; the sequence is GGKSIQQLLQIMSDDN. Residues 178 to 198 traverse the membrane as a helical segment; that stretch reads TAPLTSVQCFLVFSCIAMIMS. The Cytoplasmic segment spans residues 199–205; the sequence is QFPNLNS. A helical transmembrane segment spans residues 206 to 226; that stretch reads LFGVSLIGAFMGIAYCTVIWI. Over 227–241 the chain is Extracellular; sequence LPVASDSQRTQVSVS. The chain crosses the membrane as a helical span at residues 242–262; that stretch reads YATMDKSFVHIFNAIGLIALV. The Cytoplasmic segment spans residues 263-291; it reads YRGNNLVLEIQGTLPSDSKNPSCKTMWRA. A helical transmembrane segment spans residues 292 to 312; it reads VMISHALVAICMFPLTFAVYW. Topologically, residues 313–340 are extracellular; the sequence is AYGDKIPATGGPVGNYLKLYTQEHSKRA. Residues 341–361 form a helical membrane-spanning segment; that stretch reads ACFIHLTFIFSCLCSYPINLM. At 362–379 the chain is on the cytoplasmic side; it reads PACDNIEMVYITKKKKPA. A helical membrane pass occupies residues 380-402; it reads SIIVRMMLRVFLSLVCFTIAVGF. Over 403-406 the chain is Extracellular; that stretch reads PFLP. The chain crosses the membrane as a helical span at residues 407–429; sequence YLAVLIGAIALLVTFTYPCFMWI. Over 430 to 439 the chain is Cytoplasmic; it reads SIKKPQRKSP. A helical transmembrane segment spans residues 440 to 460; that stretch reads MWLFNVLVGCLGASLSVLLLV. The Extracellular segment spans residues 461-478; sequence ASAMRLAQKGLHANFFRP.

The protein belongs to the amino acid/polyamine transporter 2 family. Amino acid/auxin permease (AAAP) (TC 2.A.18.2) subfamily.

It is found in the cell membrane. In terms of biological role, amino acid transporter. In Arabidopsis thaliana (Mouse-ear cress), this protein is Lysine histidine transporter-like 7.